Reading from the N-terminus, the 431-residue chain is V-type ATP synthase beta chain (431 aa).

This sequence belongs to the ATPase alpha/beta chains family.

In terms of biological role, produces ATP from ADP in the presence of a proton gradient across the membrane. The V-type beta chain is a regulatory subunit. The protein is V-type ATP synthase beta chain of Treponema denticola (strain ATCC 35405 / DSM 14222 / CIP 103919 / JCM 8153 / KCTC 15104).